The sequence spans 74 residues: Sodium channel neurotoxin MeuNaTxalpha-11 (74 aa).

Residues 1 to 7 form the signal peptide; that stretch reads LMTGVES. Positions 9–73 constitute an LCN-type CS-alpha/beta domain; that stretch reads RDAYIAKPHN…VPIRIPGKCH (65 aa). Cystine bridges form between Cys19–Cys72, Cys23–Cys45, Cys31–Cys55, and Cys35–Cys57. A propeptide (removed by a carboxypeptidase) is located at residue Arg74.

Belongs to the long (4 C-C) scorpion toxin superfamily. Sodium channel inhibitor family. Alpha subfamily. Expressed by the venom gland.

The protein resides in the secreted. Functionally, alpha toxins bind voltage-independently at site-3 of sodium channels (Nav) and inhibit the inactivation of the activated channels, thereby blocking neuronal transmission. The polypeptide is Sodium channel neurotoxin MeuNaTxalpha-11 (Mesobuthus eupeus (Lesser Asian scorpion)).